We begin with the raw amino-acid sequence, 284 residues long: NAD kinase (284 aa).

D70 (proton acceptor) is an active-site residue. NAD(+)-binding positions include 70–71 (DG), 139–140 (NE), K167, D169, L177, 180–185 (TAYNLS), and Q236.

This sequence belongs to the NAD kinase family. The cofactor is a divalent metal cation.

The protein localises to the cytoplasm. It catalyses the reaction NAD(+) + ATP = ADP + NADP(+) + H(+). Involved in the regulation of the intracellular balance of NAD and NADP, and is a key enzyme in the biosynthesis of NADP. Catalyzes specifically the phosphorylation on 2'-hydroxyl of the adenosine moiety of NAD to yield NADP. This is NAD kinase from Helicobacter pylori (strain J99 / ATCC 700824) (Campylobacter pylori J99).